Reading from the N-terminus, the 35-residue chain is Somatostatin (35 aa).

An intrachain disulfide couples C24 to C35.

The protein belongs to the somatostatin family.

Its subcellular location is the secreted. Somatostatin inhibits the release of somatotropin. This is Somatostatin (sst) from Lampetra fluviatilis (European river lamprey).